We begin with the raw amino-acid sequence, 317 residues long: Cytochrome c biogenesis protein CcsA (317 aa).

A run of 8 helical transmembrane segments spans residues 9–29 (ILTHISFSVVSIGITIYLITF), 46–63 (TATAFCLTGLLITRWVYS), 71–91 (LYESLIFLSWSLSIIHKIFDF), 98–118 (LSAITAPSAFFTQGFATSGFL), 143–163 (MVLGYAALLCGSLLSTALLVI), 225–245 (IISLGFIFLTTGILSGAVWAN), 258–273 (ETWAFITWTIFGIYLH), and 286–306 (AIVASMGFLIIWICYFGVNLL).

Belongs to the CcmF/CycK/Ccl1/NrfE/CcsA family. May interact with Ccs1.

The protein resides in the plastid. The protein localises to the chloroplast thylakoid membrane. In terms of biological role, required during biogenesis of c-type cytochromes (cytochrome c6 and cytochrome f) at the step of heme attachment. The sequence is that of Cytochrome c biogenesis protein CcsA from Citrus sinensis (Sweet orange).